The following is a 150-amino-acid chain: Troponin C, isoform 2B (150 aa).

Position 1 is an N-acetylmethionine (Met1). 4 consecutive EF-hand domains span residues 7–42 (EQLSALQKAFDSFDTDSKGFITPETVGVILRMMGVK), 43–78 (ISEKNLQEVISETDEDGSGELEFEEFVELAAKFLIE), 83–118 (ALKAELREAFRVYDRGGNGYITTDVLKEILRELDNR), and 119–150 (LTEEDLDSIIEEVDEDGSGTLDFNEFMQMMNG). Ca(2+) is bound by residues Asp56, Asp58, Ser60, Glu62, and Glu67. Residues Asp132, Asp134, Ser136, Thr138, and Glu143 each coordinate Ca(2+).

The protein belongs to the troponin C family.

Functionally, troponin is the central regulatory protein of striated muscle contraction. Tn consists of three components: Tn-I which is the inhibitor of actomyosin ATPase, Tn-T which contains the binding site for tropomyosin and Tn-C. The binding of calcium to Tn-C abolishes the inhibitory action of Tn on actin filaments. The sequence is that of Troponin C, isoform 2B from Homarus americanus (American lobster).